The primary structure comprises 348 residues: Neuronal growth regulator 1 (348 aa).

Residues 1 to 31 (MVLLAQGACCSNQWLAAVLLSLCSCLPAGQS) form the signal peptide. Ig-like C2-type domains are found at residues 32 to 128 (VDFP…VHLT), 133 to 215 (PKIY…RVIV), and 219 to 307 (PTIQ…LPLN). Cys54 and Cys112 form a disulfide bridge. Residues Asn67 and Asn149 are each glycosylated (N-linked (GlcNAc...) asparagine). 2 cysteine pairs are disulfide-bonded: Cys154–Cys197 and Cys239–Cys291. Position 181 is a phosphotyrosine (Tyr181). Asn269, Asn280, Asn288, and Asn301 each carry an N-linked (GlcNAc...) asparagine glycan. Gly318 carries the GPI-anchor amidated glycine lipid modification. The propeptide at 319–348 (SACDLFSCWSLALTLSSVISIFYLKNAILQ) is removed in mature form.

The protein belongs to the immunoglobulin superfamily. IgLON family. In terms of tissue distribution, expressed in brain.

It localises to the cell membrane. May be involved in cell-adhesion. May function as a trans-neural growth-promoting factor in regenerative axon sprouting in the mammalian brain. The protein is Neuronal growth regulator 1 (Negr1) of Mus musculus (Mouse).